The chain runs to 592 residues: Guanylate-binding protein 1 (592 aa).

Residues 1-311 form a GTPase domain (Globular) region; that stretch reads MASEIHMTGP…NAISSGDLPC (311 aa). One can recognise a GB1/RHD3-type G domain in the interval 35-278; that stretch reads TQPMVVVAIV…FCSYIFSNSK (244 aa). GTP is bound by residues 45 to 52, 67 to 69, and 97 to 101; these read GLYRTGKS, LGS, and DTEGL. Ser-156 is subject to Phosphoserine. Cys-589 carries the post-translational modification Cysteine methyl ester. The S-farnesyl cysteine moiety is linked to residue Cys-589. Position 590 is a phosphothreonine (Thr-590). The propeptide at 590 to 592 is removed in mature form; the sequence is TIS.

Belongs to the TRAFAC class dynamin-like GTPase superfamily. GB1/RHD3 GTPase family. GB1 subfamily. Homodimer; homodimerization occurs upon GTP-binding and is required for the second hydrolysis step from GDP to GMP. Undergoes conformational changes and oligomerization upon GTP-binding and hydrolysis. Heterodimer with other family members, including GBP2, GBP3, GBP4 and GBP5. Dimerization regulates subcellular location to membranous structures. Interacts with SQSTM1. Interacts (when phosphorylated) with 14-3-3 protein sigma (SFN); leading to GBP1 retention in the cytosol and inactivation. In terms of processing, isoprenylation is required for proper subcellular location. Post-translationally, phosphorylated at Ser-156 by PIM1 in absence of infection, inhibits GBP1: phosphorylation promotes interaction with 14-3-3 protein sigma (SFN), leading to GBP1 retention in the cytosol. Dephosphorylated in response to infection, liberating GBP1.

The protein resides in the cytoplasmic vesicle membrane. It is found in the golgi apparatus membrane. Its subcellular location is the cell membrane. The protein localises to the cytoplasm. It localises to the cytosol. The protein resides in the secreted. The enzyme catalyses GTP + H2O = GDP + phosphate + H(+). It catalyses the reaction GDP + H2O = GMP + phosphate + H(+). Functionally, interferon (IFN)-inducible GTPase that plays important roles in innate immunity against a diverse range of bacterial, viral and protozoan pathogens. Hydrolyzes GTP to GMP in two consecutive cleavage reactions: GTP is first hydrolyzed to GDP and then to GMP in a processive manner. Following infection, recruited to the pathogen-containing vacuoles or vacuole-escaped bacteria and promotes both inflammasome assembly and autophagy. Acts as a positive regulator of inflammasome assembly by facilitating the detection of inflammasome ligands from pathogens. Involved in the lysis of pathogen-containing vacuoles, releasing pathogens into the cytosol. Following pathogen release in the cytosol, forms a protein coat in a GTPase-dependent manner that encapsulates pathogens and promotes the detection of ligands by pattern recognition receptors. Plays a key role in inflammasome assembly in response to infection by Gram-negative bacteria: following pathogen release in the cytosol, forms a protein coat that encapsulates Gram-negative bacteria and directly binds to lipopolysaccharide (LPS), disrupting the O-antigen barrier and unmasking lipid A that is that detected by the non-canonical inflammasome effector CASP4/CASP11. Also promotes recruitment of proteins that mediate bacterial cytolysis, leading to release double-stranded DNA (dsDNA) that activates the AIM2 inflammasome. Involved in autophagy by regulating bacteriolytic peptide generation via its interaction with ubiquitin-binding protein SQSTM1, which delivers monoubiquitinated proteins to autolysosomes for the generation of bacteriolytic peptides. Confers protection to several pathogens, including the bacterial pathogens L.monocytogenes and M.bovis BCG as well as the protozoan pathogen T.gondii. Exhibits antiviral activity against influenza virus. The chain is Guanylate-binding protein 1 (GBP1) from Pongo abelii (Sumatran orangutan).